The primary structure comprises 934 residues: AP-2 complex subunit alpha (934 aa).

Positions 623 to 670 (RVPENAEIRETKSPVPNSHNNAHSNAQTNHTSSANNANASSDLLGLST) are disordered. The span at 636 to 645 (PVPNSHNNAH) shows a compositional bias: polar residues. Residues 646 to 663 (SNAQTNHTSSANNANASS) are compositionally biased toward low complexity.

Belongs to the adapter complexes large subunit family. In terms of assembly, adaptor protein complex 2 (AP-2) is a heterotetramer composed of two large adaptins (alpha-type and beta-type subunits), a medium adaptin (mu-type subunit AP50) and a small adaptin (sigma-type subunit AP17).

It is found in the cell membrane. Its subcellular location is the membrane. It localises to the coated pit. In terms of biological role, adaptins are components of the adapter complexes which link clathrin to receptors in coated vesicles. Clathrin-associated protein complexes are believed to interact with the cytoplasmic tails of membrane proteins, leading to their selection and concentration. Alpha adaptin is a subunit of the plasma membrane adapter. This Anopheles gambiae (African malaria mosquito) protein is AP-2 complex subunit alpha.